Reading from the N-terminus, the 31-residue chain is Basic phospholipase A2 13 (31 aa).

The protein belongs to the phospholipase A2 family. Group I subfamily. Ca(2+) is required as a cofactor. In terms of tissue distribution, expressed by the venom gland.

The protein resides in the secreted. It carries out the reaction a 1,2-diacyl-sn-glycero-3-phosphocholine + H2O = a 1-acyl-sn-glycero-3-phosphocholine + a fatty acid + H(+). Functionally, snake venom phospholipase A2 (PLA2) that inhibits neuromuscular transmission by blocking acetylcholine release from the nerve termini. PLA2 catalyzes the calcium-dependent hydrolysis of the 2-acyl groups in 3-sn-phosphoglycerides. In Bungarus fasciatus (Banded krait), this protein is Basic phospholipase A2 13.